The primary structure comprises 426 residues: Pyrophosphate--fructose 6-phosphate 1-phosphotransferase 1 (426 aa).

Gly-15 provides a ligand contact to diphosphate. Residue Asp-114 participates in Mg(2+) binding. Residues 140–142, 186–188, Glu-247, and 308–311 contribute to the substrate site; these read TID, MGR, and YELR. The active-site Proton acceptor is Asp-142.

Belongs to the phosphofructokinase type A (PFKA) family. PPi-dependent PFK group II subfamily. Clade 'Short' sub-subfamily. Homotetramer. Requires Mg(2+) as cofactor.

It is found in the cytoplasm. It carries out the reaction beta-D-fructose 6-phosphate + diphosphate = beta-D-fructose 1,6-bisphosphate + phosphate + H(+). Its pathway is carbohydrate degradation; glycolysis; D-glyceraldehyde 3-phosphate and glycerone phosphate from D-glucose: step 3/4. With respect to regulation, non-allosteric. In terms of biological role, catalyzes the phosphorylation of D-fructose 6-phosphate, the first committing step of glycolysis. Uses inorganic phosphate (PPi) as phosphoryl donor instead of ATP like common ATP-dependent phosphofructokinases (ATP-PFKs), which renders the reaction reversible, and can thus function both in glycolysis and gluconeogenesis. Consistently, PPi-PFK can replace the enzymes of both the forward (ATP-PFK) and reverse (fructose-bisphosphatase (FBPase)) reactions. This is Pyrophosphate--fructose 6-phosphate 1-phosphotransferase 1 (Pfk1) from Trichomonas vaginalis (strain ATCC PRA-98 / G3).